We begin with the raw amino-acid sequence, 248 residues long: MKLLLLLLSFSLAPKTEAGEIIGGHEAKPHSRPYMAYLQIMDEYSGSKKCGGFLIREDFVLTAAHCSGSKINVTLGAHNIKEQEKMQQIIPVVKIIPHPAYNSKTISNDIMLLKLKSKAKRSSAVKPLNLPRRNVKVKPGDVCYVAGWGKLGPMGKYSDTLQEVELTVQEDQKCESYLKNYFDKANEICAGDPKIKRASFRGDSGGPLVCKKVAAGIVSYGQNDGSTPRAFTKVSTFLSWIKKTMKKS.

An N-terminal signal peptide occupies residues 1-18 (MKLLLLLLSFSLAPKTEA). Positions 19–20 (GE) are cleaved as a propeptide — activation peptide. Residues 21 to 246 (IIGGHEAKPH…FLSWIKKTMK (226 aa)) form the Peptidase S1 domain. The cysteines at positions 50 and 66 are disulfide-linked. Active-site charge relay system residues include H65 and D109. 2 disulfides stabilise this stretch: C143/C210 and C174/C189. The Charge relay system role is filled by S204.

It belongs to the peptidase S1 family. Granzyme subfamily.

It localises to the secreted. Its subcellular location is the cytolytic granule. It carries out the reaction Preferential cleavage: -Asp-|-Xaa- &gt;&gt; -Asn-|-Xaa- &gt; -Met-|-Xaa-, -Ser-|-Xaa-.. With respect to regulation, inactivated by the serine protease inhibitor diisopropylfluorophosphate. Functionally, abundant protease in the cytosolic granules of cytotoxic T-cells and NK-cells which activates caspase-independent pyroptosis when delivered into the target cell through the immunological synapse. It cleaves after Asp. Once delivered into the target cell, acts by catalyzing cleavage of gasdermin-E (GSDME), releasing the pore-forming moiety of GSDME, thereby triggering pyroptosis and target cell death. Seems to be linked to an activation cascade of caspases (aspartate-specific cysteine proteases) responsible for apoptosis execution. Cleaves caspase-3 and -9 (CASP3 and CASP9, respectively) to give rise to active enzymes mediating apoptosis. Cleaves and activates CASP7 in response to bacterial infection, promoting plasma membrane repair. This is Granzyme B (Gzmb) from Rattus norvegicus (Rat).